The primary structure comprises 600 residues: Novobiocin biosynthesis protein H (600 aa).

A disordered region spans residues 505–526 (GGKTDRAGLPDPVKATQPAGLG). A Carrier domain is found at 526–600 (GPRTPAEKVL…QLAAIATLEE (75 aa)). S561 carries the O-(pantetheine 4'-phosphoryl)serine modification.

This sequence belongs to the ATP-dependent AMP-binding enzyme family.

It participates in antibiotic biosynthesis; novobiocin biosynthesis. Its function is as follows. Together with NovI, involved in the formation of a beta-OH-Tyr intermediate in the novobiocin biosynthesis pathway, an aminocoumarin family antibiotic that targets bacterial DNA gyrases. The ATP-dependent AMP-binding region activates L-Tyr as L-tyrosyl-AMP and then transfers the L-tyrosyl group to the acyl carrier domain through thioester formation to form a tyrosyl-S intermediate that is covalently tethered to NovH (L-Tyr-S-NovH). The protein is Novobiocin biosynthesis protein H (novH) of Streptomyces niveus (Streptomyces spheroides).